A 529-amino-acid polypeptide reads, in one-letter code: Meiosis 1 arrest protein (529 aa).

Disordered regions lie at residues 180–201 (KGIQ…DESS) and 504–529 (AASK…PSHT). Positions 188–200 (SPSPTEEPSNDES) are enriched in polar residues. At S516 the chain carries Phosphoserine.

Expressed in germ cells of the testis. Expressed from spermatogonia to spermatids. Expressed at very low levels in lung, stomach, thymus. Not detected in Sertoli cells.

It localises to the cytoplasm. In terms of biological role, required for meiosis I progression during spermatogenesis. This Mus musculus (Mouse) protein is Meiosis 1 arrest protein (M1ap).